Consider the following 689-residue polypeptide: Glycine--tRNA ligase beta subunit (689 aa).

This sequence belongs to the class-II aminoacyl-tRNA synthetase family. Tetramer of two alpha and two beta subunits.

Its subcellular location is the cytoplasm. The enzyme catalyses tRNA(Gly) + glycine + ATP = glycyl-tRNA(Gly) + AMP + diphosphate. This Dictyoglomus turgidum (strain DSM 6724 / Z-1310) protein is Glycine--tRNA ligase beta subunit.